The chain runs to 204 residues: Holliday junction resolvase RecU (204 aa).

The Mg(2+) site is built by Thr89, Asp91, Asp104, and Gln123.

Belongs to the RecU family. Mg(2+) serves as cofactor.

It localises to the cytoplasm. It catalyses the reaction Endonucleolytic cleavage at a junction such as a reciprocal single-stranded crossover between two homologous DNA duplexes (Holliday junction).. Functionally, endonuclease that resolves Holliday junction intermediates in genetic recombination. Cleaves mobile four-strand junctions by introducing symmetrical nicks in paired strands. Promotes annealing of linear ssDNA with homologous dsDNA. Required for DNA repair, homologous recombination and chromosome segregation. The sequence is that of Holliday junction resolvase RecU from Leuconostoc mesenteroides subsp. mesenteroides (strain ATCC 8293 / DSM 20343 / BCRC 11652 / CCM 1803 / JCM 6124 / NCDO 523 / NBRC 100496 / NCIMB 8023 / NCTC 12954 / NRRL B-1118 / 37Y).